The sequence spans 263 residues: 4-hydroxy-2-oxo-heptane-1,7-dioate aldolase (263 aa).

Residue histidine 45 is the Proton acceptor of the active site. Glutamine 147 provides a ligand contact to substrate. Glutamate 149 lines the a divalent metal cation pocket. Alanine 174 and aspartate 175 together coordinate substrate. Aspartate 175 lines the a divalent metal cation pocket.

It belongs to the HpcH/HpaI aldolase family. As to quaternary structure, homohexamer; trimer of dimers. It depends on a divalent metal cation as a cofactor.

It catalyses the reaction 4-hydroxy-2-oxoheptanedioate = succinate semialdehyde + pyruvate. Its pathway is aromatic compound metabolism; 4-hydroxyphenylacetate degradation; pyruvate and succinate semialdehyde from 4-hydroxyphenylacetate: step 7/7. Its function is as follows. Catalyzes the reversible retro-aldol cleavage of 4-hydroxy-2-ketoheptane-1,7-dioate (HKHD) to pyruvate and succinic semialdehyde. In Salmonella dublin (strain CT_02021853), this protein is 4-hydroxy-2-oxo-heptane-1,7-dioate aldolase.